We begin with the raw amino-acid sequence, 483 residues long: Glutamate--tRNA ligase (483 aa).

Positions 11 to 21 (PSPTGHLHIGN) match the 'HIGH' region motif. 4 residues coordinate Zn(2+): cysteine 108, cysteine 110, histidine 135, and aspartate 137. Residues 252-256 (KLSKR) carry the 'KMSKS' region motif. Lysine 255 is a binding site for ATP.

It belongs to the class-I aminoacyl-tRNA synthetase family. Glutamate--tRNA ligase type 1 subfamily. Monomer. The cofactor is Zn(2+).

The protein localises to the cytoplasm. The enzyme catalyses tRNA(Glu) + L-glutamate + ATP = L-glutamyl-tRNA(Glu) + AMP + diphosphate. Its function is as follows. Catalyzes the attachment of glutamate to tRNA(Glu) in a two-step reaction: glutamate is first activated by ATP to form Glu-AMP and then transferred to the acceptor end of tRNA(Glu). This Bacillus subtilis (strain 168) protein is Glutamate--tRNA ligase.